A 709-amino-acid chain; its full sequence is ATP-binding cassette sub-family F member 3 (709 aa).

N-acetylalanine is present on Ala2. Ser83 is modified (phosphoserine). Positions 129-143 are enriched in basic and acidic residues; the sequence is RLKAKQEKRSEKDTL. The segment at 129-171 is disordered; the sequence is RLKAKQEKRSEKDTLKTSNPLVLEEASASQAGSRKESRLESSG. Phosphoserine occurs at positions 155, 157, and 161. Residues 161 to 171 are compositionally biased toward basic and acidic residues; sequence SRKESRLESSG. 2 consecutive ABC transporter domains span residues 178–424 and 492–707; these read VRIE…LNQQ and LQLD…RREG. 210–217 provides a ligand contact to ATP; it reads GRNGLGKT. Phosphoserine is present on Ser283. 525–532 lines the ATP pocket; sequence GENGAGKS.

The protein belongs to the ABC transporter superfamily. ABCF family. EF3 subfamily.

Functionally, displays an antiviral effect against flaviviruses such as west Nile virus (WNV) in the presence of OAS1B. The polypeptide is ATP-binding cassette sub-family F member 3 (ABCF3) (Homo sapiens (Human)).